The chain runs to 415 residues: Serine--tRNA ligase (415 aa).

231–233 (TAE) is a binding site for L-serine. Residue 262-264 (RSE) participates in ATP binding. Position 285 (glutamate 285) interacts with L-serine. 349-352 (EISS) lines the ATP pocket. Serine 383 lines the L-serine pocket.

The protein belongs to the class-II aminoacyl-tRNA synthetase family. Type-1 seryl-tRNA synthetase subfamily. As to quaternary structure, homodimer. The tRNA molecule binds across the dimer.

It localises to the cytoplasm. The catalysed reaction is tRNA(Ser) + L-serine + ATP = L-seryl-tRNA(Ser) + AMP + diphosphate + H(+). It catalyses the reaction tRNA(Sec) + L-serine + ATP = L-seryl-tRNA(Sec) + AMP + diphosphate + H(+). The protein operates within aminoacyl-tRNA biosynthesis; selenocysteinyl-tRNA(Sec) biosynthesis; L-seryl-tRNA(Sec) from L-serine and tRNA(Sec): step 1/1. In terms of biological role, catalyzes the attachment of serine to tRNA(Ser). Is also able to aminoacylate tRNA(Sec) with serine, to form the misacylated tRNA L-seryl-tRNA(Sec), which will be further converted into selenocysteinyl-tRNA(Sec). This is Serine--tRNA ligase from Helicobacter pylori (strain ATCC 700392 / 26695) (Campylobacter pylori).